Reading from the N-terminus, the 68-residue chain is U19-ctenitoxin-Pn1a (68 aa).

Residue Q1 is modified to Pyrrolidone carboxylic acid. Cystine bridges form between C8/C19, C13/C28, C18/C51, C38/C59, and C53/C65.

In terms of tissue distribution, expressed by the venom gland.

Its subcellular location is the secreted. In terms of biological role, non-toxic to mice and insects. This is U19-ctenitoxin-Pn1a from Phoneutria nigriventer (Brazilian armed spider).